Consider the following 161-residue polypeptide: SsrA-binding protein (161 aa).

Belongs to the SmpB family.

Its subcellular location is the cytoplasm. In terms of biological role, required for rescue of stalled ribosomes mediated by trans-translation. Binds to transfer-messenger RNA (tmRNA), required for stable association of tmRNA with ribosomes. tmRNA and SmpB together mimic tRNA shape, replacing the anticodon stem-loop with SmpB. tmRNA is encoded by the ssrA gene; the 2 termini fold to resemble tRNA(Ala) and it encodes a 'tag peptide', a short internal open reading frame. During trans-translation Ala-aminoacylated tmRNA acts like a tRNA, entering the A-site of stalled ribosomes, displacing the stalled mRNA. The ribosome then switches to translate the ORF on the tmRNA; the nascent peptide is terminated with the 'tag peptide' encoded by the tmRNA and targeted for degradation. The ribosome is freed to recommence translation, which seems to be the essential function of trans-translation. The polypeptide is SsrA-binding protein (Mycolicibacterium smegmatis (strain ATCC 700084 / mc(2)155) (Mycobacterium smegmatis)).